We begin with the raw amino-acid sequence, 209 residues long: Ribosomal RNA large subunit methyltransferase E (209 aa).

Residues Gly63, Trp65, Asp83, Asp99, and Asp124 each coordinate S-adenosyl-L-methionine. The Proton acceptor role is filled by Lys164.

Belongs to the class I-like SAM-binding methyltransferase superfamily. RNA methyltransferase RlmE family.

It localises to the cytoplasm. The enzyme catalyses uridine(2552) in 23S rRNA + S-adenosyl-L-methionine = 2'-O-methyluridine(2552) in 23S rRNA + S-adenosyl-L-homocysteine + H(+). Functionally, specifically methylates the uridine in position 2552 of 23S rRNA at the 2'-O position of the ribose in the fully assembled 50S ribosomal subunit. This is Ribosomal RNA large subunit methyltransferase E from Shewanella denitrificans (strain OS217 / ATCC BAA-1090 / DSM 15013).